A 94-amino-acid chain; its full sequence is Co-chaperonin GroES (94 aa).

This sequence belongs to the GroES chaperonin family. Heptamer of 7 subunits arranged in a ring. Interacts with the chaperonin GroEL.

The protein resides in the cytoplasm. Functionally, together with the chaperonin GroEL, plays an essential role in assisting protein folding. The GroEL-GroES system forms a nano-cage that allows encapsulation of the non-native substrate proteins and provides a physical environment optimized to promote and accelerate protein folding. GroES binds to the apical surface of the GroEL ring, thereby capping the opening of the GroEL channel. In Ruminiclostridium cellulolyticum (strain ATCC 35319 / DSM 5812 / JCM 6584 / H10) (Clostridium cellulolyticum), this protein is Co-chaperonin GroES.